A 308-amino-acid polypeptide reads, in one-letter code: Ribonuclease HIII (308 aa).

In terms of domain architecture, RNase H type-2 spans 88 to 304 (FHCIGSDEAG…RDKAIHLINQ (217 aa)). Positions 94, 95, and 199 each coordinate a divalent metal cation.

Belongs to the RNase HII family. RnhC subfamily. Mn(2+) is required as a cofactor. The cofactor is Mg(2+).

The protein localises to the cytoplasm. It catalyses the reaction Endonucleolytic cleavage to 5'-phosphomonoester.. Functionally, endonuclease that specifically degrades the RNA of RNA-DNA hybrids. The chain is Ribonuclease HIII from Staphylococcus epidermidis (strain ATCC 35984 / DSM 28319 / BCRC 17069 / CCUG 31568 / BM 3577 / RP62A).